Reading from the N-terminus, the 3093-residue chain is Intermembrane lipid transfer protein VPS13A (3093 aa).

The region spanning 3 to 116 is the Chorein N-terminal domain; that stretch reads FESVVVDVLN…LMEAKQQELK (114 aa). One copy of the TPR 1 repeat lies at 373 to 406; sequence LTSKKPPGELLVSLEELEKTLDVLNITIARQQAE. Ser-839 carries the phosphoserine modification. Positions 842–848 match the FFAT motif; the sequence is EFFDAPC. A Phosphoserine modification is found at Ser-1416. The region spanning 2209-2454 is the SHR-BD domain; the sequence is VAFHSPYWMV…VFYTWADPVG (246 aa). The stretch at 2860-2898 is one TPR 2 repeat; it reads ILGLDVLGNPFGLIREFSEGVEAFFYEPYQGAIQGPEEF. Residues 2953–3027 form a required for lipid droplet localization region; it reads PAGFREGITR…SSTFQGIKRA (75 aa).

It belongs to the VPS13 family. Interacts (via FFAT motif) with VAPA and VAPB. Interacts with RAB7A. Interacts with XK.

It localises to the mitochondrion outer membrane. Its subcellular location is the endoplasmic reticulum membrane. The protein localises to the endosome membrane. The protein resides in the lysosome membrane. It is found in the lipid droplet. It localises to the golgi apparatus. Its subcellular location is the cytoplasmic vesicle. The protein localises to the secretory vesicle. The protein resides in the neuronal dense core vesicle. Mediates the transfer of lipids between membranes at organelle contact sites. Required for the formation or stabilization of ER-mitochondria contact sites which enable transfer of lipids between the ER and mitochondria. Negatively regulates lipid droplet size and motility. Required for efficient lysosomal protein degradation. The chain is Intermembrane lipid transfer protein VPS13A (VPS13A) from Macaca fascicularis (Crab-eating macaque).